The chain runs to 920 residues: Dynamin-B (920 aa).

The tract at residues 65–84 is disordered; that stretch reads NSNNNNNNNNNNKINKNNNN. The Dynamin-type G domain occupies 154–448; it reads EITLPQIIVV…LTKHIRDTFP (295 aa). Positions 164-171 are G1 motif; the sequence is GSQSSGKS. 164–172 contacts GTP; sequence GSQSSGKSS. Residues 190 to 192 form a G2 motif region; it reads VTR. The segment at 204 to 241 is disordered; it reads TTSRNNVNENEDEDEDDNYYDNDNDDNSLEEWGEFGHT. Residues 212-236 are compositionally biased toward acidic residues; that stretch reads ENEDEDEDDNYYDNDNDDNSLEEWG. Positions 290-293 are G3 motif; it reads DLPG. A G4 motif region spans residues 359-362; sequence TKLD. Residues 359–365 and 390–393 each bind GTP; these read TKLDLMD and NRSQ. The tract at residues 389–392 is G5 motif; sequence VNRS. The segment at 680 to 790 is disordered; that stretch reads FQSTSSTSSS…EIQIQQQQQQ (111 aa). Composition is skewed to low complexity over residues 681–705 and 724–751; these read QSTS…NSNP and QIKQ…QKQQ. The stretch at 724 to 751 forms a coiled coil; it reads QIKQQQQQQQQQQQQSYQQQQQQQQKQQ. The span at 765–774 shows a compositional bias: pro residues; the sequence is PPSPPSPPQP. Residues 775 to 790 are compositionally biased toward low complexity; sequence KQQQSHEIQIQQQQQQ. The 92-residue stretch at 825-916 folds into the GED domain; it reads IYLLRRLLLA…SLSQSENSDL (92 aa).

Belongs to the TRAFAC class dynamin-like GTPase superfamily. Dynamin/Fzo/YdjA family.

It localises to the cytoplasm. Functionally, enzyme hydrolyzing GTP. The sequence is that of Dynamin-B (dymB) from Dictyostelium discoideum (Social amoeba).